A 624-amino-acid chain; its full sequence is Vitamin B12 transporter BtuB (624 aa).

Residues 1-21 (MTIKKYTLLTALSVTAFSGWA) form the signal peptide. Residues 31 to 38 (NEMVVTAN) carry the TonB box motif. The TBDR plug domain occupies 43–157 (PKSSVLAPVD…IGGVVNIITE (115 aa)). Cyanocob(III)alamin-binding positions include L88, S90, N97, and 115 to 116 (IS). In terms of domain architecture, TBDR beta-barrel spans 160 to 624 (TLGSTLTAGL…EYYFTGSYNF (465 aa)). 3 beta stranded membrane-spanning segments follow: residues 163–170 (STLTAGLG), 174–183 (YQNYNGSTQQ), and 189–200 (TTITLAGNYDYS). Ca(2+) contacts are provided by D204, Q216, D218, and D220. Transmembrane regions (beta stranded) follow at residues 222 to 232 (YLGKMLWLGAN) and 237 to 253 (EQFS…NRSD). Residues Y254, D255, and D266 each contribute to the Ca(2+) site. 17 consecutive transmembrane segments (beta stranded) span residues 268–282 (RSLS…INFS), 284–301 (GGYA…QDYN), 314–330 (TLDD…NTYQ), 333–342 (LGNVGGGLDW), 358–374 (YEQR…QFVG), 376–386 (VTLEGAIRGDD), 390–405 (FGWH…WEFV), 408–422 (YRLI…KAPN), 440–449 (ESTQWEAAIT), 455–464 (LDWRLSAYRN), 481–498 (YYNV…TGSF), 502–517 (PLSH…PRNA), 525–537 (RRAK…QLDW), 543–557 (DWSV…RYDS), 568–582 (PVKL…LAVS), 595–606 (IANLFDKDYEMV), and 612–624 (PGRE…SYNF). T314 contributes to the cyanocob(III)alamin binding site. Residue R525 coordinates cyanocob(III)alamin. The TonB C-terminal box signature appears at 607–624 (YGYQTPGREYYFTGSYNF).

This sequence belongs to the TonB-dependent receptor family. BtuB (TC 1.B.14.3.1) subfamily.

It localises to the cell outer membrane. Functionally, involved in the active translocation of vitamin B12 (cyanocobalamin) across the outer membrane to the periplasmic space. It derives its energy for transport by interacting with the trans-periplasmic membrane protein TonB. This is Vitamin B12 transporter BtuB from Yersinia pseudotuberculosis serotype O:1b (strain IP 31758).